A 794-amino-acid chain; its full sequence is Elongator complex protein 2 (794 aa).

WD repeat units lie at residues 55–93 (EHTKRVNTVRWLDCDKLLSGGDDAIAILWELDETGTTKS), 98–140 (GHTS…YVCF), 147–188 (DGFC…AGEG), 203–244 (GHED…KEQM), 286–328 (GHEG…IWLE), 337–376 (GNSVGFYGGKFSGDGHSIMAHSYQGGFHIWSQDPDRPQLW), 384–423 (GHYGEVRDLAWEHSGAYLMTASADQTTRLHAPWLQDGANP), 433–472 (IHGYDMQALALLSRYKFASGAEEKIVRTFQAPANFIENFR), 557–601 (GHGY…QIQK), 604–643 (GHQLTVTQLSFSPDSRYLLSVSRDRRWCLYERQDSSVSYQ), 654–693 (VHTRIIWSCDWSHDGQFFVTSSRDGKVVVWKKEEDCKESS), 705–751 (LKNE…WKLL), and 759–794 (AHHLTVRRLQFRPGKQLQLASCGEDHLVRIYDIKLT).

Belongs to the WD repeat ELP2 family. In terms of assembly, component of the elongator complex composed of Elp1, Elp2, Elp3, Elp4, Elp5 and Elp6. The elongator complex associates with and stabilizes microtubules; efficient interaction requires the full complex.

It is found in the cytoplasm. It localises to the nucleus. Its subcellular location is the cytoskeleton. The protein resides in the spindle. It participates in tRNA modification; 5-methoxycarbonylmethyl-2-thiouridine-tRNA biosynthesis. Component of the elongator complex, which is required for multiple tRNA modifications, including mcm5U (5-methoxycarbonylmethyl uridine), mcm5s2U (5-methoxycarbonylmethyl-2-thiouridine), and ncm5U (5-carbamoylmethyl uridine). The elongator complex catalyzes the formation of carboxymethyluridine in the wobble base at position 34 in tRNAs. Binding by the elongator complex stabilizes microtubules and promotes their growth. This induces central spindle asymmetry, promoting polarized signaling endosome trafficking during asymmetric cell division and cell fate assignation of sensory organ precursor cells. Involved in the regulation of the STAT pathway. The chain is Elongator complex protein 2 from Drosophila melanogaster (Fruit fly).